The primary structure comprises 87 residues: Putative sodium channel toxin Ts38 (87 aa).

Residues 1 to 22 form the signal peptide; sequence MKHLKFYSILFLFSIFVYKVNA. Cystine bridges form between Cys42–Cys65, Cys51–Cys72, and Cys55–Cys74.

This sequence belongs to the long (3 C-C) scorpion toxin superfamily. Sodium channel inhibitor family. As to expression, expressed by the venom gland.

The protein localises to the secreted. Its function is as follows. Putative sodium channel toxin. The chain is Putative sodium channel toxin Ts38 from Tityus serrulatus (Brazilian scorpion).